The sequence spans 144 residues: Urease accessory protein UreE (144 aa).

This sequence belongs to the UreE family.

The protein resides in the cytoplasm. Its function is as follows. Involved in urease metallocenter assembly. Binds nickel. Probably functions as a nickel donor during metallocenter assembly. This chain is Urease accessory protein UreE, found in Thermosynechococcus vestitus (strain NIES-2133 / IAM M-273 / BP-1).